Here is a 311-residue protein sequence, read N- to C-terminus: Phosphopantothenate--cysteine ligase (311 aa).

At Ala-2 the chain carries N-acetylalanine.

This sequence belongs to the PPC synthetase family. As to quaternary structure, homodimer.

The catalysed reaction is (R)-4'-phosphopantothenate + L-cysteine + ATP = N-[(R)-4-phosphopantothenoyl]-L-cysteine + AMP + diphosphate + H(+). It carries out the reaction (R)-4'-phosphopantothenate + L-cysteine + CTP = N-[(R)-4-phosphopantothenoyl]-L-cysteine + CMP + diphosphate + H(+). It functions in the pathway cofactor biosynthesis; coenzyme A biosynthesis; CoA from (R)-pantothenate: step 2/5. In terms of biological role, catalyzes the second step in the biosynthesis of coenzyme A from vitamin B5, where cysteine is conjugated to 4'-phosphopantothenate to form 4-phosphopantothenoylcysteine. Has a preference for ATP over CTP as a cosubstrate. The chain is Phosphopantothenate--cysteine ligase (PPCS) from Homo sapiens (Human).